A 360-amino-acid chain; its full sequence is N6-Methyl-AMP deaminase (360 aa).

Zn(2+) contacts are provided by His-23 and His-25. N(6)-methyl-AMP is bound by residues His-25, Asn-27, His-73, Ser-105 to Arg-108, Asp-147, and Gly-180. His-207 contributes to the Zn(2+) binding site. Residues Glu-210, Asp-292, and Asp-293 each coordinate N(6)-methyl-AMP. The active-site Proton donor is the Glu-210. Asp-292 contributes to the Zn(2+) binding site.

It belongs to the metallo-dependent hydrolases superfamily. Adenosine and AMP deaminases family. Monomer. Requires Zn(2+) as cofactor.

It carries out the reaction N(6)-methyl-AMP + H2O + H(+) = IMP + methylamine. In terms of biological role, catalyzes the hydrolysis of the free cytosolic methylated adenosine nucleotide N(6)-methyl-AMP (N6-mAMP) to produce inositol monophosphate (IMP) and methylamine. Is required for the catabolism of cytosolic N6-mAMP, which is derived from the degradation of mRNA containing N6-methylated adenine (m6A). The protein is N6-Methyl-AMP deaminase (Mapda) of Mus musculus (Mouse).